Here is a 319-residue protein sequence, read N- to C-terminus: GATA transcription factor 18 (319 aa).

Positions 1-15 (MPDAAAAAAAAQDAD) are enriched in low complexity. Positions 1–74 (MPDAAAAAAA…AAPEPVSALL (74 aa)) are disordered. Acidic residues predominate over residues 31 to 60 (DNDDDDGDDGTEEDEEEDDDEEGDEEELPP). A Tify domain is found at 74-109 (LPGSPNQLTLLFQGEVYVFESVTPEKVQAVLLLLGR). Residues 143 to 185 (RVASLIRFREKRKERNFDKKIRYAVRKEVALRMQRRKGQFAGR) enclose the CCT domain. A GATA-type zinc finger spans residues 215 to 242 (CQNCGTSEKMTPAMRRGPAGPRTLCNAC). The disordered stretch occupies residues 292-319 (ITASHGEVMGDSTPANEAEIGAPKAQSQ).

Belongs to the type IV zinc-finger family. Class C subfamily.

The protein resides in the nucleus. Its function is as follows. Transcriptional activator that specifically binds 5'-GATA-3' or 5'-GAT-3' motifs within gene promoters. The protein is GATA transcription factor 18 of Oryza sativa subsp. japonica (Rice).